A 311-amino-acid chain; its full sequence is Salutaridine reductase (311 aa).

NADP(+) contacts are provided by residues 21-24 (NKGI), Arg44, 70-71 (DV), and Asn98. Residues Tyr129 and Ser180 each contribute to the substrate site. Residues Tyr236, Lys240, and 267 to 272 (VKTEMN) each bind NADP(+). The active-site Proton acceptor is Tyr236. The cysteines at positions 263 and 305 are disulfide-linked.

This sequence belongs to the short-chain dehydrogenases/reductases (SDR) family.

It carries out the reaction (7S)-salutaridinol + NADP(+) = salutaridine + NADPH + H(+). It functions in the pathway alkaloid biosynthesis; morphine biosynthesis. With respect to regulation, strong substrate inhibition. Was thought to be due to mutually exclusive productive and non-productive modes of substrate binding in the active site. Alternatively, SALR may undergo significant conformational changes during catalytic turnover. Short-chain dehydrogenases/reductases involved in biosynthesis of morphinan-type benzylisoquinoline and opiate alkaloids natural products. Catalyzes specifically the stereospecific conversion of salutaridine to salutaridinol. This is Salutaridine reductase from Papaver somniferum (Opium poppy).